The primary structure comprises 827 residues: Translation initiation factor IF-2 (827 aa).

The tract at residues 49-205 is disordered; the sequence is ALNREKEEKE…GAPDKKREWE (157 aa). Basic and acidic residues-rich tracts occupy residues 50–73, 96–106, 116–129, 137–150, 157–168, and 182–205; these read LNRE…KAEA, RPREQRSDRPQ, PEPR…RPGE, RPRD…KERG, FGEKKERPPFPR, and EAPK…REWE. In terms of domain architecture, tr-type G spans 326-495; sequence PRPPIVTVMG…LLVADLKELK (170 aa). A G1 region spans residues 335-342; it reads GHVDHGKT. 335 to 342 lines the GTP pocket; sequence GHVDHGKT. The segment at 360 to 364 is G2; the sequence is GITQH. The segment at 381–384 is G3; sequence DTPG. GTP is bound by residues 381-385 and 435-438; these read DTPGH and NKID. The interval 435-438 is G4; it reads NKID. The interval 471-473 is G5; sequence SAL.

This sequence belongs to the TRAFAC class translation factor GTPase superfamily. Classic translation factor GTPase family. IF-2 subfamily.

The protein localises to the cytoplasm. Its function is as follows. One of the essential components for the initiation of protein synthesis. Protects formylmethionyl-tRNA from spontaneous hydrolysis and promotes its binding to the 30S ribosomal subunits. Also involved in the hydrolysis of GTP during the formation of the 70S ribosomal complex. This is Translation initiation factor IF-2 from Carboxydothermus hydrogenoformans (strain ATCC BAA-161 / DSM 6008 / Z-2901).